The sequence spans 469 residues: ATP synthase subunit beta (469 aa).

Gly-155–Thr-162 contributes to the ATP binding site.

The protein belongs to the ATPase alpha/beta chains family. In terms of assembly, F-type ATPases have 2 components, CF(1) - the catalytic core - and CF(0) - the membrane proton channel. CF(1) has five subunits: alpha(3), beta(3), gamma(1), delta(1), epsilon(1). CF(0) has three main subunits: a(1), b(2) and c(9-12). The alpha and beta chains form an alternating ring which encloses part of the gamma chain. CF(1) is attached to CF(0) by a central stalk formed by the gamma and epsilon chains, while a peripheral stalk is formed by the delta and b chains.

Its subcellular location is the cell inner membrane. It catalyses the reaction ATP + H2O + 4 H(+)(in) = ADP + phosphate + 5 H(+)(out). Produces ATP from ADP in the presence of a proton gradient across the membrane. The catalytic sites are hosted primarily by the beta subunits. In Thermosipho melanesiensis (strain DSM 12029 / CIP 104789 / BI429), this protein is ATP synthase subunit beta.